The chain runs to 373 residues: Arfaptin-1 (373 aa).

The disordered stretch occupies residues 1 to 47 (MAQESPKNSAAEIPVTSNGEVDDAHEHGYNRDLKHSLPSGLGLSETQ). Ala2 is modified (N-acetylalanine). The residue at position 5 (Ser5) is a Phosphoserine. Basic and acidic residues predominate over residues 22-35 (DDAHEHGYNRDLKH). Residues Ser36, Ser39, Ser69, Ser79, and Ser132 each carry the phosphoserine modification. One can recognise an AH domain in the interval 153–353 (TVDLELEAQI…NQKQLELTLK (201 aa)). Thr361 carries the post-translational modification Phosphothreonine.

In terms of assembly, forms homodimers or heterodimers with ARFIP2. Interacts with non-myristoylated GTP-bound ARF3, but not to GDP-bound ARF3. Interacts with ARF1. Binds with lower affinity to ARF5 and with very little affinity to ARF6. Interacts with ARL1. Interacts with ATG9A. Phosphorylated by PRKD1; phosphorylation delocalizes ARFIP1 from the Golgi and disrupts its ability to inhibit the activity of ADP-ribosylation factor, an important component of the vesicle scission machinery.

Its subcellular location is the golgi apparatus. It localises to the trans-Golgi network membrane. Its function is as follows. Plays a role in controlling biogenesis of secretory granules at the trans-Golgi network. Mechanistically, binds ARF-GTP at the neck of a growing secretory granule precursor and forms a protective scaffold. Once the granule precursor has been completely loaded, active PRKD1 phosphorylates ARFIP1 and releases it from ARFs. In turn, ARFs induce fission. Through this mechanism, ensures proper secretory granule formation at the Golgi of pancreatic beta cells. This is Arfaptin-1 from Mus musculus (Mouse).